The following is a 164-amino-acid chain: UPF0305 protein MJ0646 (164 aa).

The protein belongs to the UPF0305 family.

The sequence is that of UPF0305 protein MJ0646 from Methanocaldococcus jannaschii (strain ATCC 43067 / DSM 2661 / JAL-1 / JCM 10045 / NBRC 100440) (Methanococcus jannaschii).